Reading from the N-terminus, the 947-residue chain is MTPLSSPLSQYWQTVVERLPEGFTETSLSVQAKSVLTFSDFALDSVIAHPEWLAELESASPQADEWRHYAGWLQEALAGVCDDASLMRELRFFRRRIMVRIAWAQTLSLVDDETILQQLSHLAETLIVGARDWLYAACCREWGTPCNPQGVPQPLLILGMGKLGGGELNFSSDIDLIFAWPEHGETRGGRRELDNAQFFTRLGQRLIKALDQPTMDGFVYRVDMRLRPFGDSGPLVLSFAALEDYYQEQGRDWERYAMVKARLMGDNDDAWSRELRAMLRPFVFRRYIDFSVIQSLRNMKGMIAREVRRRGLKDNIKLGAGGIREIEFIVQVFQLIRGGREPSLQSRSLLPTLDAIAALHLLPENDVAQLRVAYLFLRRLENLLQSINDEQTQTLPADDLNRARLAWGMKAENWPQLVGELTDHMANVRRVFNELIGDDEADTPQEEERSEPWREVWQDALQEDDSTPVLAHLADEDRRQVLTLIADFRKELDKRPIGPRGRQVLDQLMPHLLADVCSREDAAVTLSRITPLLAGIVTRTTYLELLSEFPGALKHLIMLCAASPMIASQLARYPLLLDELLDPGTLYQPTATDAYRDELRQYLLRVPEEDEEQQLEALRQFKQAQLLRIAAADIAGTLPVMKVSDHLTWLAEAMIDAVVQQAWTQMVARYGQPAHLDERQGRGFAVVGYGKLGGWELGYSSDLDLIFLHDCPMDVMTNGEREIDGRQFYLRLAQRIMHLFSTRTSSGILYEVDARLRPSGAAGMLVTSADAFADYQQHEAWTWEHQALVRARVVYGDPQLTSQFDAVRRTIMTTARDGKTLQTEVREMREKMRAHLGNKHRDRFDIKADEGGITDIEFIAQYLVLRYAHEKPKLTRWSDNVRILELLAQNGIMDEHEAQALTVAYTTLRDELHHLALQELPGHVAQTCFSKERALVQASWRKWLVAV.

The adenylyl removase stretch occupies residues 1 to 440; the sequence is MTPLSSPLSQ…VFNELIGDDE (440 aa). The tract at residues 450-947 is adenylyl transferase; it reads SEPWREVWQD…ASWRKWLVAV (498 aa).

Belongs to the GlnE family. Mg(2+) is required as a cofactor.

The catalysed reaction is [glutamine synthetase]-O(4)-(5'-adenylyl)-L-tyrosine + phosphate = [glutamine synthetase]-L-tyrosine + ADP. The enzyme catalyses [glutamine synthetase]-L-tyrosine + ATP = [glutamine synthetase]-O(4)-(5'-adenylyl)-L-tyrosine + diphosphate. In terms of biological role, involved in the regulation of glutamine synthetase GlnA, a key enzyme in the process to assimilate ammonia. When cellular nitrogen levels are high, the C-terminal adenylyl transferase (AT) inactivates GlnA by covalent transfer of an adenylyl group from ATP to specific tyrosine residue of GlnA, thus reducing its activity. Conversely, when nitrogen levels are low, the N-terminal adenylyl removase (AR) activates GlnA by removing the adenylyl group by phosphorolysis, increasing its activity. The regulatory region of GlnE binds the signal transduction protein PII (GlnB) which indicates the nitrogen status of the cell. The sequence is that of Bifunctional glutamine synthetase adenylyltransferase/adenylyl-removing enzyme from Salmonella paratyphi C (strain RKS4594).